The chain runs to 429 residues: Glutamate-1-semialdehyde 2,1-aminomutase (429 aa).

N6-(pyridoxal phosphate)lysine is present on Lys267.

This sequence belongs to the class-III pyridoxal-phosphate-dependent aminotransferase family. HemL subfamily. In terms of assembly, homodimer. Requires pyridoxal 5'-phosphate as cofactor.

The protein localises to the cytoplasm. The enzyme catalyses (S)-4-amino-5-oxopentanoate = 5-aminolevulinate. It functions in the pathway porphyrin-containing compound metabolism; protoporphyrin-IX biosynthesis; 5-aminolevulinate from L-glutamyl-tRNA(Glu): step 2/2. This Anaeromyxobacter sp. (strain Fw109-5) protein is Glutamate-1-semialdehyde 2,1-aminomutase.